Reading from the N-terminus, the 399-residue chain is Argininosuccinate synthase (399 aa).

9–17 (AYSGGLDTS) contributes to the ATP binding site. Tyr-85 lines the L-citrulline pocket. Residue Gly-115 coordinates ATP. L-aspartate-binding residues include Thr-117, Asn-121, and Asp-122. Residue Asn-121 participates in L-citrulline binding. L-citrulline contacts are provided by Arg-125, Ser-173, Glu-258, and Tyr-270.

It belongs to the argininosuccinate synthase family. Type 1 subfamily. As to quaternary structure, homotetramer.

It is found in the cytoplasm. The catalysed reaction is L-citrulline + L-aspartate + ATP = 2-(N(omega)-L-arginino)succinate + AMP + diphosphate + H(+). The protein operates within amino-acid biosynthesis; L-arginine biosynthesis; L-arginine from L-ornithine and carbamoyl phosphate: step 2/3. The protein is Argininosuccinate synthase of Streptococcus uberis (strain ATCC BAA-854 / 0140J).